We begin with the raw amino-acid sequence, 571 residues long: Coiled-coil domain-containing protein 22 homolog (571 aa).

Coiled coils occupy residues 406–434 (MMDL…SRTA) and 509–571 (CAEL…AHLR).

Belongs to the CCDC22 family.

The chain is Coiled-coil domain-containing protein 22 homolog from Culex quinquefasciatus (Southern house mosquito).